The chain runs to 150 residues: Deoxyuridine 5'-triphosphate nucleotidohydrolase (150 aa).

Residues 69–71 (RSG), asparagine 82, 86–88 (LID), and lysine 96 contribute to the substrate site.

The protein belongs to the dUTPase family. Mg(2+) is required as a cofactor.

The catalysed reaction is dUTP + H2O = dUMP + diphosphate + H(+). It functions in the pathway pyrimidine metabolism; dUMP biosynthesis; dUMP from dCTP (dUTP route): step 2/2. Functionally, this enzyme is involved in nucleotide metabolism: it produces dUMP, the immediate precursor of thymidine nucleotides and it decreases the intracellular concentration of dUTP so that uracil cannot be incorporated into DNA. This is Deoxyuridine 5'-triphosphate nucleotidohydrolase from Neisseria gonorrhoeae (strain NCCP11945).